The chain runs to 477 residues: Ankyrin repeat, SAM and basic leucine zipper domain-containing protein 1 (477 aa).

Phosphoserine is present on residues Ser-17, Ser-18, and Ser-20. ANK repeat units follow at residues 46–76 (EKKE…SVDA), 80–109 (YGWT…NASF), 112–146 (DKQT…DPNV), 150–179 (RLMT…EVNT), 183–212 (NGYT…NKML), and 216–245 (DGKL…PLEG). The region spanning 274–336 (SYAAFGDLEV…KILAALKELE (63 aa)) is the SAM domain.

Interacts with DDX4, PIWIL1, RANBP9 and TDRD1.

The protein localises to the cytoplasm. In terms of biological role, plays a central role during spermatogenesis by repressing transposable elements and preventing their mobilization, which is essential for the germline integrity. Acts via the piRNA metabolic process, which mediates the repression of transposable elements during meiosis by forming complexes composed of piRNAs and Piwi proteins and governs the methylation and subsequent repression of transposons. Its association with pi-bodies suggests a participation in the primary piRNAs metabolic process. Required prior to the pachytene stage to facilitate the production of multiple types of piRNAs, including those associated with repeats involved in the regulation of retrotransposons. May act by mediating protein-protein interactions during germ cell maturation. This is Ankyrin repeat, SAM and basic leucine zipper domain-containing protein 1 (ASZ1) from Callithrix jacchus (White-tufted-ear marmoset).